The following is a 524-amino-acid chain: Tubulin-specific chaperone E (524 aa).

An N-acetylserine modification is found at serine 2. In terms of domain architecture, CAP-Gly spans 27-71 (GAVPPVAGLWLGVEWDNPERGKHDGSHEGTMYFKCRHPTGGSFVR). LRR repeat units follow at residues 154–175 (NIRVVNLSKNLLSTWDEVVLIA), 180–201 (DLEALDLSENKLQFPSDSPTLT), 206–227 (TLKTLVLNKTGITWTEVLHCAP), 231–253 (VLEELYLKSNNISISERPVNVLQ), 254–275 (KMRLLDLSSNPSIDESQLSLIA), 279–300 (RLEHLVLSDIGLSSIHFPDAEI), and 309–330 (ALKYLIVNDNQISEWSFINELD). The LRRCT domain occupies 343–381 (NPLSKADKAEEIIIAKIAQLRTLNRCQILPEERRGAELD). At lysine 460 the chain carries N6-acetyllysine. Serine 492 is modified (phosphoserine).

Belongs to the TBCE family. As to quaternary structure, supercomplex made of cofactors A to E. Cofactors A and D function by capturing and stabilizing tubulin in a quasi-native conformation. Cofactor E binds to the cofactor D-tubulin complex; interaction with cofactor C then causes the release of tubulin polypeptides that are committed to the native state. Cofactors B and E can form a heterodimer which binds to alpha-tubulin and enhances their ability to dissociate tubulin heterodimers. Interacts with TBCD. As to expression, ubiquitously expressed.

The protein localises to the cytoplasm. The protein resides in the cytoskeleton. In terms of biological role, tubulin-folding protein; involved in the second step of the tubulin folding pathway and in the regulation of tubulin heterodimer dissociation. Required for correct organization of microtubule cytoskeleton and mitotic splindle, and maintenance of the neuronal microtubule network. The polypeptide is Tubulin-specific chaperone E (Tbce) (Mus musculus (Mouse)).